We begin with the raw amino-acid sequence, 380 residues long: MTAFPAAPDLAPPSRAAQGERVLCAMSGGVDSSVTASLLKEQGYQVIGAMMRFWPDDKRTDTFDSCCSPDAAYEARRVAEQVGVPFYLLDYREPFQRHIVGPFLEEYARGRTPNPCVNCNTKVKFDELVKKAKMLGCRYVATGHYVKRVDNAQGEVEFHRGDDPRKDQTYFLWGTPRDALPYILFPVGELEKPQVREIAAERGLLTAQKPESQNICFVPGKVQDFVAEHLPQAQGYIREIATGEVVGEHLGTQFYTLGQKKGLGLYQSHRVRHVVHLDPDSNTVWVGDYDDCLWTGLKATDANYLLDLAELPTELEVQVRYRTAPVKAHVLHADAEGFELEFAEPQFAVAPGQSAVLYAGSRLLGGGLIADHARELPALT.

Residues 25 to 32 (AMSGGVDS) and Met51 each bind ATP. Cys119 serves as the catalytic Nucleophile. Cys119 and Cys216 are joined by a disulfide. Residue Gly143 coordinates ATP. An interaction with tRNA region spans residues 166 to 168 (KDQ). Cys216 acts as the Cysteine persulfide intermediate in catalysis. An interaction with tRNA region spans residues 320–321 (RY).

This sequence belongs to the MnmA/TRMU family.

The protein resides in the cytoplasm. It carries out the reaction S-sulfanyl-L-cysteinyl-[protein] + uridine(34) in tRNA + AH2 + ATP = 2-thiouridine(34) in tRNA + L-cysteinyl-[protein] + A + AMP + diphosphate + H(+). In terms of biological role, catalyzes the 2-thiolation of uridine at the wobble position (U34) of tRNA, leading to the formation of s(2)U34. The polypeptide is tRNA-specific 2-thiouridylase MnmA (Deinococcus radiodurans (strain ATCC 13939 / DSM 20539 / JCM 16871 / CCUG 27074 / LMG 4051 / NBRC 15346 / NCIMB 9279 / VKM B-1422 / R1)).